The chain runs to 213 residues: Urease accessory protein UreE (213 aa).

Positions 170–213 (EHHGHSHSHSHSHSHDHDHDHDHDHDHDHQHGPSCSHGHHHGHR) are disordered. Residues 182–200 (HSHDHDHDHDHDHDHDHQH) show a composition bias toward basic and acidic residues.

Belongs to the UreE family.

It is found in the cytoplasm. Its function is as follows. Involved in urease metallocenter assembly. Binds nickel. Probably functions as a nickel donor during metallocenter assembly. In Burkholderia mallei (strain NCTC 10229), this protein is Urease accessory protein UreE.